The primary structure comprises 132 residues: Cytochrome c' (132 aa).

The heme c site is built by Arg-10, Gln-11, Asp-65, Cys-122, Cys-125, and His-126.

Post-translationally, binds 1 heme c group covalently per subunit.

Cytochrome c' is the most widely occurring bacterial c-type cytochrome. Cytochromes c' are high-spin proteins and the heme has no sixth ligand. Their exact function is not known. The sequence is that of Cytochrome c' from Halomonas halodenitrificans (strain ATCC 12084 / NCIMB 8669) (Paracoccus halodenitrificans).